The chain runs to 107 residues: Nucleoid-associated protein A1G_07310 (107 aa).

The protein belongs to the YbaB/EbfC family. Homodimer.

It is found in the cytoplasm. The protein localises to the nucleoid. Binds to DNA and alters its conformation. May be involved in regulation of gene expression, nucleoid organization and DNA protection. This Rickettsia rickettsii (strain Sheila Smith) protein is Nucleoid-associated protein A1G_07310.